The following is a 259-amino-acid chain: Dihydroorotate dehydrogenase B (NAD(+)), electron transfer subunit (259 aa).

In terms of domain architecture, FAD-binding FR-type spans 2–102 (MQKQNMIVVN…LGPLGHGFPV (101 aa)). Residues 53–56 (RPIS), 70–72 (LYR), and 77–78 (GT) each bind FAD. Residues Cys-221, Cys-226, Cys-229, and Cys-246 each contribute to the [2Fe-2S] cluster site.

This sequence belongs to the PyrK family. As to quaternary structure, heterotetramer of 2 PyrK and 2 PyrD type B subunits. [2Fe-2S] cluster is required as a cofactor. It depends on FAD as a cofactor.

It functions in the pathway pyrimidine metabolism; UMP biosynthesis via de novo pathway; orotate from (S)-dihydroorotate (NAD(+) route): step 1/1. Functionally, responsible for channeling the electrons from the oxidation of dihydroorotate from the FMN redox center in the PyrD type B subunit to the ultimate electron acceptor NAD(+). This Bacillus cereus (strain ZK / E33L) protein is Dihydroorotate dehydrogenase B (NAD(+)), electron transfer subunit.